The sequence spans 825 residues: Glycerol-3-phosphate acyltransferase (825 aa).

The short motif at 306-311 (CHRSHM) is the HXXXXD motif element. Residues 802–825 (SASSSTEMEASTSSSQTAEETTQG) are disordered.

Belongs to the GPAT/DAPAT family.

Its subcellular location is the cell inner membrane. The catalysed reaction is sn-glycerol 3-phosphate + an acyl-CoA = a 1-acyl-sn-glycero-3-phosphate + CoA. The protein operates within phospholipid metabolism; CDP-diacylglycerol biosynthesis; CDP-diacylglycerol from sn-glycerol 3-phosphate: step 1/3. The polypeptide is Glycerol-3-phosphate acyltransferase (Pectobacterium atrosepticum (strain SCRI 1043 / ATCC BAA-672) (Erwinia carotovora subsp. atroseptica)).